A 479-amino-acid chain; its full sequence is Glutamate--tRNA ligase (479 aa).

Residues 9–19 carry the 'HIGH' region motif; that stretch reads PSPTGNLHIGT. Residues 243–247 carry the 'KMSKS' region motif; the sequence is KLSKR. Lys246 lines the ATP pocket.

This sequence belongs to the class-I aminoacyl-tRNA synthetase family. Glutamate--tRNA ligase type 1 subfamily. In terms of assembly, monomer.

It localises to the cytoplasm. It carries out the reaction tRNA(Glu) + L-glutamate + ATP = L-glutamyl-tRNA(Glu) + AMP + diphosphate. Its function is as follows. Catalyzes the attachment of glutamate to tRNA(Glu) in a two-step reaction: glutamate is first activated by ATP to form Glu-AMP and then transferred to the acceptor end of tRNA(Glu). This chain is Glutamate--tRNA ligase, found in Synechococcus sp. (strain JA-3-3Ab) (Cyanobacteria bacterium Yellowstone A-Prime).